The primary structure comprises 1054 residues: Kinesin-like protein KIN-7G (1054 aa).

One can recognise a Kinesin motor domain in the interval K17 to V341. G105–T112 is an ATP binding site. Coiled coils occupy residues V350–A425 and T611–V640. 2 disordered regions span residues C600–S648 and E740–I760. The span at T613–E631 shows a compositional bias: acidic residues.

Belongs to the TRAFAC class myosin-kinesin ATPase superfamily. Kinesin family. KIN-7 subfamily.

This is Kinesin-like protein KIN-7G from Arabidopsis thaliana (Mouse-ear cress).